Consider the following 351-residue polypeptide: Fructose-1,6-bisphosphatase class 1 1 (351 aa).

Mg(2+) contacts are provided by glutamate 84, aspartate 106, leucine 108, and aspartate 109. Substrate is bound by residues 109-112 and asparagine 205; that span reads DGSS. Glutamate 277 contacts Mg(2+).

It belongs to the FBPase class 1 family. In terms of assembly, homotetramer. It depends on Mg(2+) as a cofactor.

The protein localises to the cytoplasm. The catalysed reaction is beta-D-fructose 1,6-bisphosphate + H2O = beta-D-fructose 6-phosphate + phosphate. It functions in the pathway carbohydrate biosynthesis; Calvin cycle. The sequence is that of Fructose-1,6-bisphosphatase class 1 1 from Methylibium petroleiphilum (strain ATCC BAA-1232 / LMG 22953 / PM1).